The sequence spans 137 residues: Small ribosomal subunit protein uS11 (137 aa).

The disordered stretch occupies residues 116 to 137; sequence EDVTPIPHDGTRRPGGKRGRRV.

It belongs to the universal ribosomal protein uS11 family. Part of the 30S ribosomal subunit.

Functionally, located on the platform of the 30S subunit. This Methanopyrus kandleri (strain AV19 / DSM 6324 / JCM 9639 / NBRC 100938) protein is Small ribosomal subunit protein uS11.